The following is a 365-amino-acid chain: Histidinol-phosphate aminotransferase (365 aa).

The tract at residues 1-23 (MSRPVPNPGILDIAPYTPGKSPV) is disordered. The residue at position 221 (lysine 221) is an N6-(pyridoxal phosphate)lysine.

It belongs to the class-II pyridoxal-phosphate-dependent aminotransferase family. Histidinol-phosphate aminotransferase subfamily. In terms of assembly, homodimer. Pyridoxal 5'-phosphate is required as a cofactor.

It carries out the reaction L-histidinol phosphate + 2-oxoglutarate = 3-(imidazol-4-yl)-2-oxopropyl phosphate + L-glutamate. Its pathway is amino-acid biosynthesis; L-histidine biosynthesis; L-histidine from 5-phospho-alpha-D-ribose 1-diphosphate: step 7/9. The chain is Histidinol-phosphate aminotransferase from Rhodopseudomonas palustris (strain BisB18).